A 745-amino-acid polypeptide reads, in one-letter code: Inhibitor of nuclear factor kappa-B kinase subunit alpha (745 aa).

The 288-residue stretch at 15 to 302 folds into the Protein kinase domain; the sequence is WEMRERLGTG…LTLKQPRCFV (288 aa). Residues 21–29 and Lys-44 contribute to the ATP site; that span reads LGTGGFGNV. The residue at position 23 (Thr-23) is a Phosphothreonine; by PKB/AKT1 and SGK1. Asp-144 (proton acceptor) is an active-site residue. Ser-176 carries the phosphoserine; by MAP3K14 modification. Thr-179 is subject to (Microbial infection) O-acetylthreonine; by Yersinia YopJ. Ser-180 carries the post-translational modification Phosphoserine; by SGK1. The interval 455–476 is leucine-zipper; the sequence is LLRYNANLTKMKNTLISASQQL. The interval 738–743 is NEMO-binding; that stretch reads LDWSWL.

This sequence belongs to the protein kinase superfamily. Ser/Thr protein kinase family. I-kappa-B kinase subfamily. In terms of assembly, component of the I-kappa-B-kinase (IKK) core complex consisting of CHUK, IKBKB and IKBKG; probably four alpha/CHUK-beta/IKBKB dimers are associated with four gamma/IKBKG subunits. The IKK core complex seems to associate with regulatory or adapter proteins to form a IKK-signalosome holo-complex. The IKK complex associates with TERF2IP/RAP1, leading to promote IKK-mediated phosphorylation of RELA/p65. Part of a complex composed of NCOA2, NCOA3, CHUK/IKKA, IKBKB, IKBKG and CREBBP. Part of a 70-90 kDa complex at least consisting of CHUK/IKKA, IKBKB, NFKBIA, RELA, ELP1 and MAP3K14. Directly interacts with TRPC4AP. May interact with TRAF2. Interacts with NALP2. May interact with MAVS/IPS1. Interacts with ARRB1 and ARRB2. Interacts with NLRC5; prevents CHUK phosphorylation and kinase activity. Interacts with PIAS1; this interaction induces PIAS1 phosphorylation. Interacts with ZNF268 isoform 2; the interaction is further increased in a TNF-alpha-dependent manner. Interacts with FOXO3. Interacts with IFIT5; the interaction synergizes the recruitment of IKK to MAP3K7 and enhances IKK phosphorylation. Interacts with LRRC14. Interacts with SASH1. Directly interacts with DDX3X after the physiological activation of the TLR7 and TLR8 pathways; this interaction enhances CHUK autophosphorylation. (Microbial infection) Interacts with InlC of Listeria monocytogenes. In terms of processing, phosphorylated by MAP3K14/NIK, AKT and to a lesser extent by MEKK1, and dephosphorylated by PP2A. Autophosphorylated. Ubiquitinated by TRIM56 via 'Lys-63'-linked ubiquitination, promoting activation of CHUK/IKKA. Post-translationally, (Microbial infection) Acetylation of Thr-179 by Yersinia YopJ prevents phosphorylation and activation, thus blocking the I-kappa-B signaling pathway. Widely expressed.

It localises to the cytoplasm. The protein localises to the nucleus. The catalysed reaction is L-seryl-[I-kappa-B protein] + ATP = O-phospho-L-seryl-[I-kappa-B protein] + ADP + H(+). Activated when phosphorylated and inactivated when dephosphorylated. In terms of biological role, serine kinase that plays an essential role in the NF-kappa-B signaling pathway which is activated by multiple stimuli such as inflammatory cytokines, bacterial or viral products, DNA damages or other cellular stresses. Acts as a part of the canonical IKK complex in the conventional pathway of NF-kappa-B activation and phosphorylates inhibitors of NF-kappa-B on serine residues. These modifications allow polyubiquitination of the inhibitors and subsequent degradation by the proteasome. In turn, free NF-kappa-B is translocated into the nucleus and activates the transcription of hundreds of genes involved in immune response, growth control, or protection against apoptosis. Negatively regulates the pathway by phosphorylating the scaffold protein TAXBP1 and thus promoting the assembly of the A20/TNFAIP3 ubiquitin-editing complex (composed of A20/TNFAIP3, TAX1BP1, and the E3 ligases ITCH and RNF11). Therefore, CHUK plays a key role in the negative feedback of NF-kappa-B canonical signaling to limit inflammatory gene activation. As part of the non-canonical pathway of NF-kappa-B activation, the MAP3K14-activated CHUK/IKKA homodimer phosphorylates NFKB2/p100 associated with RelB, inducing its proteolytic processing to NFKB2/p52 and the formation of NF-kappa-B RelB-p52 complexes. In turn, these complexes regulate genes encoding molecules involved in B-cell survival and lymphoid organogenesis. Also participates in the negative feedback of the non-canonical NF-kappa-B signaling pathway by phosphorylating and destabilizing MAP3K14/NIK. Within the nucleus, phosphorylates CREBBP and consequently increases both its transcriptional and histone acetyltransferase activities. Modulates chromatin accessibility at NF-kappa-B-responsive promoters by phosphorylating histones H3 at 'Ser-10' that are subsequently acetylated at 'Lys-14' by CREBBP. Additionally, phosphorylates the CREBBP-interacting protein NCOA3. Also phosphorylates FOXO3 and may regulate this pro-apoptotic transcription factor. Phosphorylates RIPK1 at 'Ser-25' which represses its kinase activity and consequently prevents TNF-mediated RIPK1-dependent cell death. Phosphorylates AMBRA1 following mitophagy induction, promoting AMBRA1 interaction with ATG8 family proteins and its mitophagic activity. The protein is Inhibitor of nuclear factor kappa-B kinase subunit alpha (CHUK) of Homo sapiens (Human).